A 143-amino-acid polypeptide reads, in one-letter code: uncharacterized protein (143 aa).

The tract at residues 13–143 (SLQFPHHRPG…QDAAHQCRIQ (131 aa)) is disordered. Residues 17–31 (PHHRPGLRRHRKNTT) show a composition bias toward basic residues. Basic and acidic residues-rich tracts occupy residues 35 to 48 (AAVDRPRRTRRGDA), 84 to 96 (DGREASRTAAEEK), and 112 to 133 (EKQHVGQDPDANGNHDDDDHAG). Low complexity predominate over residues 134-143 (QDAAHQCRIQ).

This is an uncharacterized protein from Homo sapiens (Human).